Reading from the N-terminus, the 556-residue chain is 2-succinyl-5-enolpyruvyl-6-hydroxy-3-cyclohexene-1-carboxylate synthase (556 aa).

The protein belongs to the TPP enzyme family. MenD subfamily. In terms of assembly, homodimer. The cofactor is Mg(2+). Mn(2+) is required as a cofactor. It depends on thiamine diphosphate as a cofactor.

The enzyme catalyses isochorismate + 2-oxoglutarate + H(+) = 5-enolpyruvoyl-6-hydroxy-2-succinyl-cyclohex-3-ene-1-carboxylate + CO2. It functions in the pathway quinol/quinone metabolism; 1,4-dihydroxy-2-naphthoate biosynthesis; 1,4-dihydroxy-2-naphthoate from chorismate: step 2/7. Its pathway is quinol/quinone metabolism; menaquinone biosynthesis. Catalyzes the thiamine diphosphate-dependent decarboxylation of 2-oxoglutarate and the subsequent addition of the resulting succinic semialdehyde-thiamine pyrophosphate anion to isochorismate to yield 2-succinyl-5-enolpyruvyl-6-hydroxy-3-cyclohexene-1-carboxylate (SEPHCHC). The chain is 2-succinyl-5-enolpyruvyl-6-hydroxy-3-cyclohexene-1-carboxylate synthase from Escherichia coli (strain SMS-3-5 / SECEC).